The following is a 350-amino-acid chain: Biotin synthase (350 aa).

In terms of domain architecture, Radical SAM core spans 54 to 278 (REIQLSTLLS…TMPQSYVRLS (225 aa)). Residues Cys-69, Cys-73, and Cys-76 each coordinate [4Fe-4S] cluster. [2Fe-2S] cluster-binding residues include Cys-113, Cys-144, Cys-204, and Arg-276.

The protein belongs to the radical SAM superfamily. Biotin synthase family. As to quaternary structure, homodimer. It depends on [4Fe-4S] cluster as a cofactor. [2Fe-2S] cluster serves as cofactor.

It carries out the reaction (4R,5S)-dethiobiotin + (sulfur carrier)-SH + 2 reduced [2Fe-2S]-[ferredoxin] + 2 S-adenosyl-L-methionine = (sulfur carrier)-H + biotin + 2 5'-deoxyadenosine + 2 L-methionine + 2 oxidized [2Fe-2S]-[ferredoxin]. The protein operates within cofactor biosynthesis; biotin biosynthesis; biotin from 7,8-diaminononanoate: step 2/2. Catalyzes the conversion of dethiobiotin (DTB) to biotin by the insertion of a sulfur atom into dethiobiotin via a radical-based mechanism. The protein is Biotin synthase of Neisseria gonorrhoeae (strain ATCC 700825 / FA 1090).